Consider the following 316-residue polypeptide: tRNA dimethylallyltransferase (316 aa).

An ATP-binding site is contributed by 17-24 (GPTASGKT). 19 to 24 (TASGKT) provides a ligand contact to substrate. 4 interaction with substrate tRNA regions span residues 42–45 (DSAL), 166–170 (QRLSR), 247–252 (RCVGYR), and 280–287 (KRQITWLR).

It belongs to the IPP transferase family. Monomer. Mg(2+) serves as cofactor.

It catalyses the reaction adenosine(37) in tRNA + dimethylallyl diphosphate = N(6)-dimethylallyladenosine(37) in tRNA + diphosphate. In terms of biological role, catalyzes the transfer of a dimethylallyl group onto the adenine at position 37 in tRNAs that read codons beginning with uridine, leading to the formation of N6-(dimethylallyl)adenosine (i(6)A). This chain is tRNA dimethylallyltransferase, found in Shigella dysenteriae serotype 1 (strain Sd197).